The sequence spans 62 residues: Large ribosomal subunit protein uL30 (62 aa).

It belongs to the universal ribosomal protein uL30 family. As to quaternary structure, part of the 50S ribosomal subunit.

This is Large ribosomal subunit protein uL30 from Geobacillus kaustophilus (strain HTA426).